The following is an 811-amino-acid chain: Probable disease resistance protein At5g04720 (811 aa).

The region spanning 1 to 147 (MADIIGGEVV…KVDSLNEKLG (147 aa)) is the RPW8 domain. 2 consecutive NB-ARC domains span residues 180-242 (VGLD…VSQS) and 312-437 (TYDV…NVLV). 207–214 (GMSGSGKT) is an ATP binding site. 5 LRR repeats span residues 650 to 674 (FPKL…ICGI), 676 to 699 (SLNS…SKLK), 700 to 722 (ALQL…ICEL), 724 to 746 (RLKY…IGKV), and 748 to 769 (TLEK…VVLL).

It belongs to the disease resistance NB-LRR family.

Its function is as follows. Probable disease resistance protein. The protein is Probable disease resistance protein At5g04720 of Arabidopsis thaliana (Mouse-ear cress).